We begin with the raw amino-acid sequence, 181 residues long: Protein canopy homolog 1 (181 aa).

Residues 1–21 form the signal peptide; sequence MAILLHFGVLITAFLSSHVEG. Positions 25–177 constitute a Saposin B-type domain; sequence PILYCGACRA…EETGLCKEYL (153 aa). 3 disulfide bridges follow: Cys29–Cys173, Cys32–Cys166, and Cys87–Cys139. Residues 178–181 carry the Prevents secretion from ER motif; sequence HNEL.

This sequence belongs to the canopy family.

It is found in the endoplasmic reticulum. Its function is as follows. Plays an role in early embryonic development. This chain is Protein canopy homolog 1 (cnpy1), found in Xenopus laevis (African clawed frog).